A 1145-amino-acid polypeptide reads, in one-letter code: Major DNA-binding protein (1145 aa).

A required for nuclear localization region spans residues 1115-1145 (APQAAAPQYSGSSSVAGKKRKANVILGDLDL).

It belongs to the herpesviridae major DNA-binding protein family. Homooligomers. Forms double-helical filaments necessary for the formation of replication compartments within the host nucleus. Interacts with the origin-binding protein. Interacts with the helicase primase complex; this interaction stimulates primer synthesis activity of the helicase-primase complex. Interacts with the DNA polymerase. Interacts with the alkaline exonuclease; this interaction increases its nuclease processivity.

The protein resides in the host nucleus. Functionally, plays several crucial roles in viral infection. Participates in the opening of the viral DNA origin to initiate replication by interacting with the origin-binding protein. May disrupt loops, hairpins and other secondary structures present on ssDNA to reduce and eliminate pausing of viral DNA polymerase at specific sites during elongation. Promotes viral DNA recombination by performing strand-transfer, characterized by the ability to transfer a DNA strand from a linear duplex to a complementary single-stranded DNA circle. Can also catalyze the renaturation of complementary single strands. Additionally, reorganizes the host cell nucleus, leading to the formation of prereplicative sites and replication compartments. This process is driven by the protein which can form double-helical filaments in the absence of DNA. This chain is Major DNA-binding protein, found in Equus caballus (Horse).